We begin with the raw amino-acid sequence, 161 residues long: Phosphopantetheine adenylyltransferase (161 aa).

Ser-9 is a binding site for substrate. ATP is bound by residues 9–10 (SF) and His-17. Substrate-binding residues include Lys-41, Thr-73, and Arg-87. ATP contacts are provided by residues 88–90 (GIR), Glu-98, and 123–129 (YQYVSSS).

Belongs to the bacterial CoaD family. As to quaternary structure, homohexamer. It depends on Mg(2+) as a cofactor.

The protein localises to the cytoplasm. The enzyme catalyses (R)-4'-phosphopantetheine + ATP + H(+) = 3'-dephospho-CoA + diphosphate. It functions in the pathway cofactor biosynthesis; coenzyme A biosynthesis; CoA from (R)-pantothenate: step 4/5. Functionally, reversibly transfers an adenylyl group from ATP to 4'-phosphopantetheine, yielding dephospho-CoA (dPCoA) and pyrophosphate. The sequence is that of Phosphopantetheine adenylyltransferase from Levilactobacillus brevis (strain ATCC 367 / BCRC 12310 / CIP 105137 / JCM 1170 / LMG 11437 / NCIMB 947 / NCTC 947) (Lactobacillus brevis).